The primary structure comprises 515 residues: Cytochrome P450 705A22 (515 aa).

The helical transmembrane segment at 9–29 threads the bilayer; the sequence is FQNCFIFILIFLLTFLCFFFF. Cys454 serves as a coordination point for heme.

This sequence belongs to the cytochrome P450 family. Heme is required as a cofactor.

It is found in the membrane. Functionally, plays a role in the gravitropic response of the inflorescence stems and roots. May affect the synthesis of flavonols that have a role in regulating auxin transport. This Arabidopsis thaliana (Mouse-ear cress) protein is Cytochrome P450 705A22.